The following is a 603-amino-acid chain: Probable NOT transcription complex subunit VIP2 (603 aa).

Polar residues-rich tracts occupy residues Met-1–Ser-28 and Asn-36–Ser-70. Disordered stretches follow at residues Met-1–Ser-70, Asn-212–Leu-242, Ala-306–Ser-335, and Ser-355–Ser-377. The span at Gly-312–Ser-335 shows a compositional bias: polar residues.

This sequence belongs to the CNOT2/3/5 family. As to quaternary structure, binds to VIP1. Interacts with Agrobacterium tumefaciens VirE2. Forms a complex made of Agrobacterium VirE2, VIP1, VIP2 and single-stranded DNA (ssDNA).

The protein localises to the nucleus. Functionally, transcriptional regulator required for Agrobacterium-mediated stable genetic transformation by T-DNA integration in host genome, but not for T-DNA transient expression. This Nicotiana benthamiana protein is Probable NOT transcription complex subunit VIP2 (VIP2).